Here is a 98-residue protein sequence, read N- to C-terminus: Prostate and testis expressed protein 3 (98 aa).

Residues 1-20 (MNKHFLLLFSLFYFIVEATS) form the signal peptide. Residues 21–97 (LKCVTCHLRT…CCNSDFCNFR (77 aa)) enclose the UPAR/Ly6 domain. Disulfide bonds link C23-C50, C26-C35, C42-C68, and C72-C88.

Belongs to the PATE family.

It is found in the secreted. The polypeptide is Prostate and testis expressed protein 3 (Pate3) (Mus musculus (Mouse)).